We begin with the raw amino-acid sequence, 486 residues long: Flavin-dependent monooxygenase pboD (486 aa).

FAD is bound by residues Asp51, Gly65, and Arg124. Residue Arg203 is part of the active site. Residues Asp344 and Gly357 each contribute to the FAD site.

The protein belongs to the paxM FAD-dependent monooxygenase family. The cofactor is FAD.

It participates in secondary metabolite biosynthesis. In terms of biological role, flavin-dependent monooxygenase; part of the gene cluster that mediates the biosynthesis of protubonine B, a hydroxylated and diacetylated cyclo-L-Trp-L-Leu derivative. Within the pathway, pboD catalyzes the hydroxylation at C-3 of the indole ring of cyclo-L-Trp-L-Leu and subsequent formation of the pyrrolidine ring, eading to the production of protubonine D. PboD is also able to accept other cyclodipeptides (CDPs) as substrates, including cyclo-L-Trp-L-Trp, cyclo-L-Trp-L-Tyr, cyclo-L-Trp-L-Phe, cyclo-L-Trp-L-Met, cyclo-L-Trp-L-Ala, cyclo-L-Trp-L-Pro and cyclo-L-Trp-Gly. Assays with cyclo-L-Trp-L-Trp, cyclo-L-Trp-L-Tyr, cyclo-L-Trp-L-Phe show similar or even slightly higher conversion yields, compared with that of the natural substrate cyclo-L-Trp-L-Leu, whereas cyclo-L-Trp-L-Pro and cyclo-L-Trp-Gly are accepted by PboD but only with conversion yields of 10 and 4%, respectively. Cyclo-L-Trp-L-His is not accepted as a substrate. The first step of the protubonine B synthesis is performed by the nonribosomal peptide synthetase pboA that catalyzes the formation of cyclo-L-Trp-L-Leu by condensing L-Leu with L-Trp. The flavin-dependent monooxygenase pboD is responsible for hydroxylation at C-3 of the indole ring and subsequent formation of the pyrrolidine ring, leadind to protubonine D. Protubonine D is further diacetylated by two acetyltransferases, pboB and pboC, to form the final product protubonine B via protubonine C. The polypeptide is Flavin-dependent monooxygenase pboD (Aspergillus ustus).